The primary structure comprises 251 residues: Protein TK1472 (251 aa).

Belongs to the CinA family.

The chain is Protein TK1472 from Thermococcus kodakarensis (strain ATCC BAA-918 / JCM 12380 / KOD1) (Pyrococcus kodakaraensis (strain KOD1)).